Here is a 344-residue protein sequence, read N- to C-terminus: Anthranilate phosphoribosyltransferase (344 aa).

Residues glycine 80, 83–84 (GD), threonine 88, 90–93 (NVST), 108–116 (KHGNRSVSS), and serine 120 each bind 5-phospho-alpha-D-ribose 1-diphosphate. Glycine 80 is a binding site for anthranilate. Serine 92 lines the Mg(2+) pocket. Residue asparagine 111 coordinates anthranilate. Arginine 166 lines the anthranilate pocket. Mg(2+) is bound by residues aspartate 225 and glutamate 226.

Belongs to the anthranilate phosphoribosyltransferase family. In terms of assembly, homodimer. The cofactor is Mg(2+).

The enzyme catalyses N-(5-phospho-beta-D-ribosyl)anthranilate + diphosphate = 5-phospho-alpha-D-ribose 1-diphosphate + anthranilate. The protein operates within amino-acid biosynthesis; L-tryptophan biosynthesis; L-tryptophan from chorismate: step 2/5. Its function is as follows. Catalyzes the transfer of the phosphoribosyl group of 5-phosphorylribose-1-pyrophosphate (PRPP) to anthranilate to yield N-(5'-phosphoribosyl)-anthranilate (PRA). This is Anthranilate phosphoribosyltransferase from Legionella pneumophila (strain Corby).